The sequence spans 257 residues: Staphylococcal secretory antigen SsaA (257 aa).

An N-terminal signal peptide occupies residues 1-26; the sequence is MKKIATATIATAGIATFAFAHHDAQA. Repeat copies occupy residues 73-75, 76-78, 84-86, 87-89, 90-92, 93-95, 96-98, and 99-101. Positions 73 to 101 are 8 X 3 AA repeats of Y-[NS]-N; the sequence is YNNYNNYNYYGYNNYSNYNNYSNYNNYNN. Residues 101-144 form a disordered region; the sequence is NYQSNNTQSQRTTQPTGGLGASYSTSSSNVHVTTTSAPSSNGVS. Over residues 107 to 116 the composition is skewed to polar residues; sequence TQSQRTTQPT. Low complexity predominate over residues 122 to 136; that stretch reads SYSTSSSNVHVTTTS. The region spanning 136-257 is the Peptidase C51 domain; that stretch reads SAPSSNGVSL…SQAASYNYIH (122 aa).

The protein localises to the secreted. In terms of biological role, not known; immunogenic protein expressed during sepsis and particularly during episodes of infective endocarditis. The protein is Staphylococcal secretory antigen SsaA (ssaA) of Staphylococcus epidermidis.